The chain runs to 261 residues: Putative [LysW]-aminoadipate/[LysW]-glutamate kinase (261 aa).

Substrate-binding positions include 35 to 36 (GG), Arg62, and Asn162.

The protein belongs to the acetylglutamate kinase family. LysZ subfamily.

The protein resides in the cytoplasm. The catalysed reaction is [amino-group carrier protein]-C-terminal-N-(1,4-dicarboxybutan-1-yl)-L-glutamine + ATP = [amino-group carrier protein]-C-terminal-N-(1-carboxy-5-phosphooxy-5-oxopentan-1-yl)-L-glutamine + ADP. It catalyses the reaction [amino-group carrier protein]-C-terminal-gamma-(L-glutamyl)-L-glutamate + ATP = [amino-group carrier protein]-C-terminal-gamma-(5-phospho-L-glutamyl)-L-glutamate + ADP. The protein operates within amino-acid biosynthesis; L-lysine biosynthesis via AAA pathway; L-lysine from L-alpha-aminoadipate (Thermus route): step 2/5. Its pathway is amino-acid biosynthesis; L-arginine biosynthesis. Its function is as follows. Involved in both the arginine and lysine biosynthetic pathways. Phosphorylates the LysW-bound precursors glutamate (for arginine biosynthesis), respectively alpha-aminoadipate (for lysine biosynthesis). The chain is Putative [LysW]-aminoadipate/[LysW]-glutamate kinase from Pyrobaculum islandicum (strain DSM 4184 / JCM 9189 / GEO3).